The sequence spans 146 residues: Endoribonuclease YbeY (146 aa).

Zn(2+) is bound by residues His-108, His-112, and His-118.

Belongs to the endoribonuclease YbeY family. Requires Zn(2+) as cofactor.

It localises to the cytoplasm. In terms of biological role, single strand-specific metallo-endoribonuclease involved in late-stage 70S ribosome quality control and in maturation of the 3' terminus of the 16S rRNA. In Onion yellows phytoplasma (strain OY-M), this protein is Endoribonuclease YbeY.